Consider the following 638-residue polypeptide: Gamma-aminobutyric acid receptor subunit theta (638 aa).

The signal sequence occupies residues 1 to 21 (MGIRGMLRAAALLLLIRTWLA). The Extracellular portion of the chain corresponds to 22–267 (ESNGPSPTPK…FQVQREVRSY (246 aa)). Residue Asn127 is glycosylated (N-linked (GlcNAc...) asparagine). An intrachain disulfide couples Cys183 to Cys197. A helical transmembrane segment spans residues 268–288 (LVQVYWPTVLTTILSWISFWM). Topologically, residues 289-296 (NYDSSAAR) are cytoplasmic. A helical membrane pass occupies residues 297-314 (VTIGLTSILVLTTIDSHM). Topologically, residues 315–325 (RDKLPHISCIK) are extracellular. A helical membrane pass occupies residues 326-346 (AIDIYILVCLFFVFLSLLEYV). At 347–617 (YINYLFFSQV…NRVPKVDRWS (271 aa)) the chain is on the cytoplasmic side. The disordered stretch occupies residues 491–515 (ACDDEDSEESLSSEESHGHGSSHTG). Positions 492-502 (CDDEDSEESLS) are enriched in acidic residues. Residues 618–638 (RFLFPLSFGLFNVVYWLYHVY) traverse the membrane as a helical segment.

This sequence belongs to the ligand-gated ion channel (TC 1.A.9) family. Gamma-aminobutyric acid receptor (TC 1.A.9.5) subfamily. GABRQ sub-subfamily. As to quaternary structure, heteropentamer, formed by a combination of alpha (GABRA1-6), beta (GABRB1-3), gamma (GABRG1-3), delta (GABRD), epsilon (GABRE), rho (GABRR1-3), pi (GABRP) and theta (GABRQ) chains, each subunit exhibiting distinct physiological and pharmacological properties. Expressed in brain, lung, and spleen.

It localises to the postsynaptic cell membrane. The protein resides in the cell membrane. The catalysed reaction is chloride(in) = chloride(out). With respect to regulation, potentiated by etomidate, propofol, pregnanolone and pentobarbital. Theta subunit of the heteropentameric ligand-gated chloride channel gated by gamma-aminobutyric acid (GABA), a major inhibitory neurotransmitter in the brain. GABA-gated chloride channels, also named GABA(A) receptors (GABAAR), consist of five subunits arranged around a central pore and contain GABA active binding site(s) located at the alpha and beta subunit interfaces. When activated by GABA, GABAARs selectively allow the flow of chloride anions across the cell membrane down their electrochemical gradient. In Mus musculus (Mouse), this protein is Gamma-aminobutyric acid receptor subunit theta.